The primary structure comprises 1353 residues: Tenascin-R (1353 aa).

Positions 1 to 33 are cleaved as a signal peptide; it reads MGTDSENPVLRNVLISFNLLLLGAVLKPFECRL. Positions 132–156 form a coiled coil; it reads SLQELLSRIEMLEREVSMLRDQCNS. Asn179 and Asn197 each carry an N-linked (GlcNAc...) asparagine glycan. EGF-like domains are found at residues 187 to 198, 234 to 260, 265 to 291, and 292 to 323; these read CICSEGWAGSNC, CPAG…GEDC, CPRD…GEDC, and GWLR…QDCS. Residue Asn277 is glycosylated (N-linked (GlcNAc...) asparagine). Intrachain disulfides connect Cys296/Cys306 and Cys313/Cys322. 9 consecutive Fibronectin type-III domains span residues 327–419, 420–504, 505–594, 595–686, 687–776, 777–863, 864–952, 953–1037, and 1038–1126; these read PPEN…TPQG, LKFK…TLID, GPTQ…TEID, APKN…TELD, SPRD…VRPI, TQLH…TGMD, APKD…AMDA, PLGV…TLLD, and PPTN…GGRV. Asn391, Asn469, and Asn580 each carry an N-linked (GlcNAc...) asparagine glycan. N-linked (GlcNAc...) asparagine glycans are attached at residues Asn734, Asn790, Asn872, Asn1031, Asn1041, Asn1256, and Asn1342. Residues 1124-1339 form the Fibrinogen C-terminal domain; the sequence is GRVFANPQDC…FVEMKMRPYN (216 aa).

The protein belongs to the tenascin family. As to quaternary structure, forms homodimers and homotrimers. Interacts with CNTN1, NFASC and CSPG5. Brain specific.

The protein localises to the secreted. The protein resides in the extracellular space. Its subcellular location is the extracellular matrix. Its function is as follows. Neural extracellular matrix (ECM) protein involved in interactions with different cells and matrix components. Involved in cell attachment and neurite formation. Interaction with CNTN1 enhances the neurite outgrowth. This Gallus gallus (Chicken) protein is Tenascin-R (TNR).